A 91-amino-acid chain; its full sequence is MAHKKGVGSSRNGRDSNPKMRGVKRFGGELVRAGNIIVRQCGTKIKPGANVGVGRDWTLYALVDGVVQFSHYSRTQKKVSVIPVAAETTAN.

The interval methionine 1–lysine 24 is disordered.

The protein belongs to the bacterial ribosomal protein bL27 family.

In Chloroflexus aggregans (strain MD-66 / DSM 9485), this protein is Large ribosomal subunit protein bL27.